A 300-amino-acid polypeptide reads, in one-letter code: 4-diphosphocytidyl-2-C-methyl-D-erythritol kinase (300 aa).

The active site involves lysine 22. 105–115 (PMGGGLGGGSS) is an ATP binding site. Aspartate 147 is a catalytic residue.

This sequence belongs to the GHMP kinase family. IspE subfamily.

It catalyses the reaction 4-CDP-2-C-methyl-D-erythritol + ATP = 4-CDP-2-C-methyl-D-erythritol 2-phosphate + ADP + H(+). It participates in isoprenoid biosynthesis; isopentenyl diphosphate biosynthesis via DXP pathway; isopentenyl diphosphate from 1-deoxy-D-xylulose 5-phosphate: step 3/6. Catalyzes the phosphorylation of the position 2 hydroxy group of 4-diphosphocytidyl-2C-methyl-D-erythritol. The chain is 4-diphosphocytidyl-2-C-methyl-D-erythritol kinase from Colwellia psychrerythraea (strain 34H / ATCC BAA-681) (Vibrio psychroerythus).